Consider the following 1211-residue polypeptide: RNA helicase Mov10l1 (1211 aa).

Disordered regions lie at residues 340-385 and 674-710; these read KENS…GENG and WNHA…RVGD. Composition is skewed to polar residues over residues 345-372 and 674-688; these read DENI…NNRG and WNHA…QSTS. The span at 694–710 shows a compositional bias: basic and acidic residues; the sequence is TMTDQAEHGTEERRVGD. 770-777 lines the ATP pocket; that stretch reads GPPGTGKT. A DEAG box motif is present at residues 886-889; that stretch reads DEAG. Residues 1192 to 1211 are disordered; it reads DPSYPVVPESTGPEKHQEPS.

It belongs to the DNA2/NAM7 helicase family. SDE3 subfamily. Interacts with PIWIL1. Interacts with PIWIL2. Interacts with PIWIL4. Interacts with HSPA2. Interacts with PLD6. As to expression, specifically expressed in testis.

It localises to the cytoplasm. It carries out the reaction ATP + H2O = ADP + phosphate + H(+). Functionally, ATP-dependent RNA helicase required during spermatogenesis to repress transposable elements and prevent their mobilization, which is essential for germline integrity. Acts via the piRNA metabolic process, which mediates the repression of transposable elements during meiosis by forming complexes composed of piRNAs and Piwi proteins and governs the methylation and subsequent repression of transposons. Involved in the primary piRNA metabolic process. Specifically binds to piRNA precursors and promotes the generation of intermediate piRNA processing fragments that are subsequently loaded to Piwi proteins. Acts via its ATP-dependent RNA helicase activity: displays 5'-3' RNA unwinding activity and probably mediates unwinding and funneling of single-stranded piRNA precursor transcripts to the endonuclease that catalyzes the first cleavage step of piRNA processing to generate piRNA intermediate fragments that are subsequently loaded to Piwi proteins. In Homo sapiens (Human), this protein is RNA helicase Mov10l1.